Here is a 458-residue protein sequence, read N- to C-terminus: Protein unc-93 homolog A (458 aa).

5 consecutive transmembrane segments (helical) span residues 8 to 28 (VLVV…LQNL), 42 to 62 (TLST…PILI), 69 to 89 (WTIV…FHAN), 90 to 110 (WYTL…LWSA), and 140 to 160 (IFFL…SLVF). The N-linked (GlcNAc...) asparagine glycan is linked to Asn190. Transmembrane regions (helical) follow at residues 202–222 (TLLG…AVFL), 258–275 (LCLL…QEFL), 286–306 (CALG…MTAL), 321–341 (AALY…FLLW), 345–365 (TNQL…DAVW), 390–410 (LGEA…CVST), and 412–432 (LYIL…VEYL).

Belongs to the unc-93 family.

The protein localises to the cell membrane. This Mus musculus (Mouse) protein is Protein unc-93 homolog A (Unc93a).